The sequence spans 171 residues: Small ribosomal subunit protein uS5 (171 aa).

The S5 DRBM domain maps to 15 to 78; it reads LKDRLVAINR…EAAKKNLTRV (64 aa).

It belongs to the universal ribosomal protein uS5 family. Part of the 30S ribosomal subunit. Contacts proteins S4 and S8.

Functionally, with S4 and S12 plays an important role in translational accuracy. In terms of biological role, located at the back of the 30S subunit body where it stabilizes the conformation of the head with respect to the body. The sequence is that of Small ribosomal subunit protein uS5 from Phocaeicola vulgatus (strain ATCC 8482 / DSM 1447 / JCM 5826 / CCUG 4940 / NBRC 14291 / NCTC 11154) (Bacteroides vulgatus).